The sequence spans 428 residues: Aspartate--tRNA(Asp) ligase (428 aa).

Glu-170 serves as a coordination point for L-aspartate. Residues 192–195 are aspartate; sequence QLYK. Arg-213 is an L-aspartate binding site. ATP contacts are provided by residues 213-215 and Glu-351; that span reads RAE. Residues Glu-351 and Ser-354 each coordinate Mg(2+). L-aspartate-binding residues include Ser-354 and Arg-358. An ATP-binding site is contributed by 399 to 402; the sequence is GFNR.

This sequence belongs to the class-II aminoacyl-tRNA synthetase family. Type 2 subfamily. In terms of assembly, homodimer. Mg(2+) serves as cofactor.

It localises to the cytoplasm. The enzyme catalyses tRNA(Asp) + L-aspartate + ATP = L-aspartyl-tRNA(Asp) + AMP + diphosphate. In terms of biological role, catalyzes the attachment of L-aspartate to tRNA(Asp) in a two-step reaction: L-aspartate is first activated by ATP to form Asp-AMP and then transferred to the acceptor end of tRNA(Asp). The polypeptide is Aspartate--tRNA(Asp) ligase (Pyrobaculum aerophilum (strain ATCC 51768 / DSM 7523 / JCM 9630 / CIP 104966 / NBRC 100827 / IM2)).